Here is a 333-residue protein sequence, read N- to C-terminus: Ornithine carbamoyltransferase (333 aa).

Carbamoyl phosphate is bound by residues 56–59 (STRT), Q83, R107, and 134–137 (HPTQ). L-ornithine contacts are provided by residues N167, D231, and 235 to 236 (SM). Carbamoyl phosphate is bound by residues 273 to 274 (CL) and R318.

Belongs to the aspartate/ornithine carbamoyltransferase superfamily. OTCase family.

It is found in the cytoplasm. It catalyses the reaction carbamoyl phosphate + L-ornithine = L-citrulline + phosphate + H(+). It functions in the pathway amino-acid biosynthesis; L-arginine biosynthesis; L-arginine from L-ornithine and carbamoyl phosphate: step 1/3. Functionally, reversibly catalyzes the transfer of the carbamoyl group from carbamoyl phosphate (CP) to the N(epsilon) atom of ornithine (ORN) to produce L-citrulline. This is Ornithine carbamoyltransferase (argF) from Staphylococcus aureus (strain COL).